The sequence spans 269 residues: Formamidopyrimidine-DNA glycosylase (269 aa).

Pro2 functions as the Schiff-base intermediate with DNA in the catalytic mechanism. Glu3 serves as the catalytic Proton donor. Lys57 serves as the catalytic Proton donor; for beta-elimination activity. His90, Arg109, and Lys150 together coordinate DNA. An FPG-type zinc finger spans residues 235 to 269 (QVYGRKGEPCRVCGTPIVASKHAQRATFYCRQCQK). The active-site Proton donor; for delta-elimination activity is Arg259.

This sequence belongs to the FPG family. As to quaternary structure, monomer. Requires Zn(2+) as cofactor.

It carries out the reaction Hydrolysis of DNA containing ring-opened 7-methylguanine residues, releasing 2,6-diamino-4-hydroxy-5-(N-methyl)formamidopyrimidine.. It catalyses the reaction 2'-deoxyribonucleotide-(2'-deoxyribose 5'-phosphate)-2'-deoxyribonucleotide-DNA = a 3'-end 2'-deoxyribonucleotide-(2,3-dehydro-2,3-deoxyribose 5'-phosphate)-DNA + a 5'-end 5'-phospho-2'-deoxyribonucleoside-DNA + H(+). Functionally, involved in base excision repair of DNA damaged by oxidation or by mutagenic agents. Acts as a DNA glycosylase that recognizes and removes damaged bases. Has a preference for oxidized purines, such as 7,8-dihydro-8-oxoguanine (8-oxoG). Has AP (apurinic/apyrimidinic) lyase activity and introduces nicks in the DNA strand. Cleaves the DNA backbone by beta-delta elimination to generate a single-strand break at the site of the removed base with both 3'- and 5'-phosphates. The sequence is that of Formamidopyrimidine-DNA glycosylase from Enterobacter sp. (strain 638).